Here is a 298-residue protein sequence, read N- to C-terminus: Probable tRNA(His) guanylyltransferase (298 aa).

Residues D58, G59, and D105 each contribute to the Mg(2+) site. Residues 58–63 (DGRNFH) and 104–105 (SD) contribute to the GTP site.

This sequence belongs to the tRNA(His) guanylyltransferase family. As to quaternary structure, homotetramer. Interacts with MFN1 and MFN2; functions as a guanyl-nucleotide exchange factor/GEF for MFN2 and also probably MFN1. Mg(2+) serves as cofactor.

The protein localises to the cytoplasm. It is found in the mitochondrion. The enzyme catalyses a 5'-end ribonucleotide-tRNA(His) + GTP + ATP + H2O = a 5'-end phospho-guanosine-ribonucleotide-tRNA(His) + AMP + 2 diphosphate + H(+). In terms of biological role, adds a GMP to the 5'-end of tRNA(His) after transcription and RNase P cleavage. This step is essential for proper recognition of the tRNA and for the fidelity of protein synthesis. Also functions as a guanyl-nucleotide exchange factor/GEF for the MFN1 and MFN2 mitofusins thereby regulating mitochondrial fusion. By regulating both mitochondrial dynamics and bioenergetic function, it contributes to cell survival following oxidative stress. This is Probable tRNA(His) guanylyltransferase (THG1L) from Bos taurus (Bovine).